A 158-amino-acid chain; its full sequence is S-ribosylhomocysteine lyase (158 aa).

Fe cation-binding residues include H56, H60, and C125.

Belongs to the LuxS family. In terms of assembly, homodimer. Fe cation serves as cofactor.

The enzyme catalyses S-(5-deoxy-D-ribos-5-yl)-L-homocysteine = (S)-4,5-dihydroxypentane-2,3-dione + L-homocysteine. In terms of biological role, involved in the synthesis of autoinducer 2 (AI-2) which is secreted by bacteria and is used to communicate both the cell density and the metabolic potential of the environment. The regulation of gene expression in response to changes in cell density is called quorum sensing. Catalyzes the transformation of S-ribosylhomocysteine (RHC) to homocysteine (HC) and 4,5-dihydroxy-2,3-pentadione (DPD). The sequence is that of S-ribosylhomocysteine lyase from Leuconostoc mesenteroides subsp. mesenteroides (strain ATCC 8293 / DSM 20343 / BCRC 11652 / CCM 1803 / JCM 6124 / NCDO 523 / NBRC 100496 / NCIMB 8023 / NCTC 12954 / NRRL B-1118 / 37Y).